Here is a 264-residue protein sequence, read N- to C-terminus: Glutamate racemase 2 (264 aa).

Residues 10–11 and 42–43 each bind substrate; these read DS and YG. The active-site Proton donor/acceptor is the Cys-73. 74–75 provides a ligand contact to substrate; sequence NT. The active-site Proton donor/acceptor is Cys-181. 182-183 is a binding site for substrate; it reads TH.

The protein belongs to the aspartate/glutamate racemases family.

It catalyses the reaction L-glutamate = D-glutamate. Its pathway is cell wall biogenesis; peptidoglycan biosynthesis. Its function is as follows. Provides the (R)-glutamate required for cell wall biosynthesis. The chain is Glutamate racemase 2 from Caldanaerobacter subterraneus subsp. tengcongensis (strain DSM 15242 / JCM 11007 / NBRC 100824 / MB4) (Thermoanaerobacter tengcongensis).